A 387-amino-acid chain; its full sequence is Chaperone protein DnaJ (387 aa).

The J domain occupies 5 to 70 (DYYEILEVSA…QKRQAYDQFG (66 aa)). The CR-type zinc finger occupies 130 to 208 (GTTVDVRIPT…CRGEGYKHSS (79 aa)). Cysteine 143, cysteine 146, cysteine 160, cysteine 163, cysteine 182, cysteine 185, cysteine 196, and cysteine 199 together coordinate Zn(2+). 4 CXXCXGXG motif repeats span residues 143–150 (CESCDGSG), 160–167 (CPTCQGIG), 182–189 (CPNCHGTG), and 196–203 (CKTCRGEG).

This sequence belongs to the DnaJ family. As to quaternary structure, homodimer. Zn(2+) is required as a cofactor.

It is found in the cytoplasm. Participates actively in the response to hyperosmotic and heat shock by preventing the aggregation of stress-denatured proteins and by disaggregating proteins, also in an autonomous, DnaK-independent fashion. Unfolded proteins bind initially to DnaJ; upon interaction with the DnaJ-bound protein, DnaK hydrolyzes its bound ATP, resulting in the formation of a stable complex. GrpE releases ADP from DnaK; ATP binding to DnaK triggers the release of the substrate protein, thus completing the reaction cycle. Several rounds of ATP-dependent interactions between DnaJ, DnaK and GrpE are required for fully efficient folding. Also involved, together with DnaK and GrpE, in the DNA replication of plasmids through activation of initiation proteins. The protein is Chaperone protein DnaJ of Hydrogenovibrio crunogenus (strain DSM 25203 / XCL-2) (Thiomicrospira crunogena).